The primary structure comprises 174 residues: Co-chaperone protein HscB homolog (174 aa).

Residues Asn-2–Leu-74 enclose the J domain.

The protein belongs to the HscB family. In terms of assembly, interacts with HscA and stimulates its ATPase activity.

Functionally, co-chaperone involved in the maturation of iron-sulfur cluster-containing proteins. Seems to help targeting proteins to be folded toward HscA. The chain is Co-chaperone protein HscB homolog from Shewanella frigidimarina (strain NCIMB 400).